The sequence spans 1163 residues: MAQDSQGQQQSLAKFAFNIYGTLGTPQSSNSPSANSSISSHKSSKRLSKNQLSNSYSRRLTYNAERDVQAIGQLNCGIQISHHISGNEPSHHAVIGGKNYLRLLCLNRDQQQVLQEIDLLDVKSIYRSRNPNKISSVNTIKTRENTIACGMSNGTISMYKVSPYGKGTLHAMLSDHRRTVNSIDFIDSTDHIISGSQDGSIKLWDLRASPTKPVFNLQANLHNDPIRACQYSPHSVVRNKTCILSVHDSGALCKFDLRSGSGSNMYSPDRKWNLHAGPVLSLHIHPEKEYVATGGRDHKICVFNYSEGRSLRTTPENIINTYGSILKVRWSSYLVNQGGRAGDGGGMGSMHTSTSFGDSTLALTNYDLACLYLNDDPTVTIYNLNRKYIPKQIINPYSQKAISNFMWAQNEIQGRRIWTLNKANQFMAYDLDSNFDTDIKRPLDDLPPIGMSWNDNDDFIWVNQAKDEFEANFESMCDDEQFLTDTAAAATATSTAFTASTSTNTAIAAERASSFDLEDHDHKMAGSSLGTSPIERPSLTRSYTHNPMSQFMTKSPSPILRSGTGVLDMTSPPSAGSALSTSTYTPRPKLARNPSQTTQGSAGSFGSTPASSSFAIKYKSGASGPGVSGVPGGPGVPGVPGGPIGGSLRLNSMVKSPFAFPVELPFNDEEAFKFLATEYLVTTPEGFTLADTCLMNASVAHEVGAYQSSQVWRVLAISLSDEKTMNAAAARMKTRTTLDNKNHVDEPDSANADHFNAATNMSATTDPNITAVSHTKHDQEEDVDSFALKSIQSDLDNVVGSYNSNSTLSIKYGRNINPLSSVSSHGIAYHGNDVHSRTNSMHHSRANSFNNTHSVRAGSSGADDHLSVHSQSNPLAIDSTTSKRGDYELENTNLMNSIFLRSSPNSIGFGSSRSYSSLASSPIDARRALPERQVPPEPLELNHDTSLILEKKQSNHSPKLPKRSGLSIALKNDDHHDCENDYEDGTEAWSFKSLLKGALEYAASQGEITFVSTIAILFYELARDIITFDQCLGWLGEYVEILQRKCLFVEATKIINFAPLDVAEKLKTLYAADTIRLYCSHCLKLLTNEKSKRQTHGEFGYWYCDECLQRQLNCVFCNEPCKGLVVAISLKCGHRGHFGCLKEWFIDEQNVECPGGCDVPIVV.

Residues 24–52 (GTPQSSNSPSANSSISSHKSSKRLSKNQL) are disordered. Residues 28 to 41 (SSNSPSANSSISSH) show a composition bias toward low complexity. WD repeat units lie at residues 129–169 (RNPN…KGTL), 175–214 (DHRR…TKPV), 221–265 (LHND…GSNM), 274–313 (LHAG…SLRT), and 346–392 (GMGS…IPKQ). Disordered stretches follow at residues 525–606 (AGSS…GSFG) and 833–881 (DVHS…DSTT). 4 stretches are compositionally biased toward polar residues: residues 539–556 (LTRS…TKSP), 571–585 (SPPS…STYT), 593–606 (NPSQ…GSFG), and 868–880 (VHSQ…IDST). The RING-type; degenerate zinc finger occupies 1114–1157 (CVFCNEPCKGLVVAISLKCGHRGHFGCLKEWFIDEQNVECPGGC).

Belongs to the WD repeat RTC1 family.

It is found in the vacuole. Its function is as follows. May be involved in a process influencing telomere capping. In Lodderomyces elongisporus (strain ATCC 11503 / CBS 2605 / JCM 1781 / NBRC 1676 / NRRL YB-4239) (Yeast), this protein is Restriction of telomere capping protein 1 (RTC1).